A 44-amino-acid polypeptide reads, in one-letter code: Photosystem I reaction center subunit IX (44 aa).

The helical transmembrane segment at 7 to 27 (YLSVAPVLSTLWFGSLAGLLI) threads the bilayer.

This sequence belongs to the PsaJ family.

The protein localises to the plastid. The protein resides in the chloroplast thylakoid membrane. Functionally, may help in the organization of the PsaE and PsaF subunits. The sequence is that of Photosystem I reaction center subunit IX from Lactuca sativa (Garden lettuce).